The chain runs to 358 residues: Na(+)/H(+) exchange regulatory cofactor NHE-RF1 (358 aa).

Ser2 carries the post-translational modification N-acetylserine. Phosphoserine is present on residues Ser2 and Ser46. Residues 14-94 (LCCLEKGPNG…AVRLLVVDPE (81 aa)) enclose the PDZ 1 domain. The span at 114–132 (QEAPGQAEPPAAAEVQGAG) shows a compositional bias: low complexity. The segment at 114–192 (QEAPGQAEPP…DPDSPAEASG (79 aa)) is disordered. Residues 135–152 (NEPREADKSHPEQRELRP) are compositionally biased toward basic and acidic residues. The PDZ 2 domain occupies 154–234 (LCTMKKGPSG…ETKLLVVDRE (81 aa)). A phosphoserine mark is found at Ser162, Ser269, Ser280, Ser290, and Ser291. The segment at 277–358 (ALESPRPALV…SKKNELFSNL (82 aa)) is disordered. Residues 288-306 (SASSDTSEELNSQDSPPKQ) show a composition bias toward polar residues. Phosphothreonine is present on Thr293. Phosphoserine occurs at positions 294, 299, and 302. The segment covering 307–319 (DSTAPSSTSSSDP) has biased composition (low complexity). The segment covering 348-358 (WSKKNELFSNL) has biased composition (basic and acidic residues).

Homodimer, and heterodimer with NHERF2. Binds the N-termini of EZR, RDX and MSN. Binds the C-termini of PDGFRA, PDGFRB, ADRB2, NOS2 and CFTR. Binds ARHGAP17, EPI64, RACK1, OPRK1, GNAQ, CTNNB1 and PLCB3. Binds PDZK1. Interacts with CLCN3. Binds the C-terminus of PAG1. In resting T-cells, part of a PAG1-NHERF1-MSN complex which is disrupted upon TCR activation. Forms a complex with CFTR and SLC4A7. Forms a complex with SLC4A7 and ATP6V1B1. Interacts with TRPC4 (via the PDZ-binding domain). Directly interacts with HTR4. Interacts (via the PDZ 1 domain) with PODXL (via the C-terminal PDZ-binding motif DTHL); interaction is not detected in glomerular epithelium cells. Interacts (via the PDZ 1 domain) with PODXL (via the C-terminal PDZ-binding motif DTHL); the interaction take place early in the secretory pathway and is necessary for its apical membrane sorting. Interacts with SLC26A3. Interacts with MCC. Interacts with SLC34A1. Interacts (via the PDZ domains) with SLC26A6 isoform 4 and isoform 5. Interacts (via PDZ domains) with ACE2 (via PDZ-binding motif); the interaction may enhance ACE2 membrane residence. Post-translationally, phosphorylated on serine residues. Detected in liver, kidney, pancreas, prostate, spleen, small intestine and placenta, in particular in the syncytiotrophoblast.

It localises to the cytoplasm. It is found in the apical cell membrane. The protein localises to the endomembrane system. The protein resides in the cell projection. Its subcellular location is the filopodium. It localises to the ruffle. It is found in the microvillus. In terms of biological role, scaffold protein that connects plasma membrane proteins with members of the ezrin/moesin/radixin family and thereby helps to link them to the actin cytoskeleton and to regulate their surface expression. Necessary for recycling of internalized ADRB2. Was first known to play a role in the regulation of the activity and subcellular location of SLC9A3. Necessary for cAMP-mediated phosphorylation and inhibition of SLC9A3. May enhance Wnt signaling. May participate in HTR4 targeting to microvilli. Involved in the regulation of phosphate reabsorption in the renal proximal tubules. Involved in sperm capacitation. May participate in the regulation of the chloride and bicarbonate homeostasis in spermatozoa. In Homo sapiens (Human), this protein is Na(+)/H(+) exchange regulatory cofactor NHE-RF1.